Here is a 147-residue protein sequence, read N- to C-terminus: Cysteine proteinase inhibitor 2 (147 aa).

The N-terminal stretch at Met-1–Ala-27 is a signal peptide. The region spanning Leu-87–Ser-117 is the Cystatin domain. Positions Gln-98 to Gly-102 match the Secondary area of contact motif. N-linked (GlcNAc...) asparagine glycosylation is present at Asn-115.

The protein belongs to the cystatin family. Phytocystatin subfamily.

It localises to the secreted. Functionally, specific inhibitor of cysteine proteinases. Probably involved in the regulation of endogenous processes and in defense against pests and pathogens. The sequence is that of Cysteine proteinase inhibitor 2 (CYS2) from Arabidopsis thaliana (Mouse-ear cress).